Reading from the N-terminus, the 396-residue chain is ATP-dependent RNA helicase eIF4A (396 aa).

A Q motif motif is present at residues 23–51 (YEFDDMNLNEKLLRGVFGYGFNKPSAIQQ). The Helicase ATP-binding domain maps to 54 to 223 (IMPIIEGNDV…AKFMQNPVRI (170 aa)). 67–74 (AQSGTGKT) provides a ligand contact to ATP. The DEAD box signature appears at 171 to 174 (DEAD). A Helicase C-terminal domain is found at 234–395 (GIKQFYVNVE…ELPSDIGTLF (162 aa)).

The protein belongs to the DEAD box helicase family. eIF4A subfamily. In terms of assembly, component of the eIF4F complex, which composition varies with external and internal environmental conditions. It is composed of at least eIF4A, eIF4E and eIF4G.

It is found in the cytoplasm. It carries out the reaction ATP + H2O = ADP + phosphate + H(+). ATP-dependent RNA helicase which is a subunit of the eIF4F complex involved in cap recognition and is required for mRNA binding to ribosome. In the current model of translation initiation, eIF4A unwinds RNA secondary structures in the 5'-UTR of mRNAs which is necessary to allow efficient binding of the small ribosomal subunit, and subsequent scanning for the initiator codon. This chain is ATP-dependent RNA helicase eIF4A (TIF1), found in Candida glabrata (strain ATCC 2001 / BCRC 20586 / JCM 3761 / NBRC 0622 / NRRL Y-65 / CBS 138) (Yeast).